A 675-amino-acid chain; its full sequence is Nexilin (675 aa).

A disordered region spans residues 1–66 (MNDISQKAEI…RKEQYIRERE (66 aa)). Lys-16 is subject to Phosphoserine. Over residues 27-66 (GKGDVKDKFEAMQRAREERNQRRSRDEKQRRKEQYIRERE) the composition is skewed to basic and acidic residues. Ser-80 bears the Phosphoserine mark. Residues 105–127 (RFAEMEKQRQEEQRKRTEEERKR) are disordered. Ser-241 bears the Phosphoserine mark. Disordered stretches follow at residues 254–278 (LERQ…EEEK) and 313–336 (SFEE…ARRR). Ser-357 and Ser-365 each carry phosphoserine. Thr-370 bears the Phosphothreonine mark. Disordered regions lie at residues 487–513 (ENFH…KVNM) and 551–584 (LQKK…APWF). Residues Ser-564 and Ser-569 each carry the phosphoserine modification. Residues 582–670 (PWFKKPLKNT…GSAASTCILT (89 aa)) form the Ig-like domain.

Interacts with F-actin. As to expression, abundantly expressed in heart and skeletal muscle, and at lower levels in placenta, lung, liver and pancreas. Also expressed in HeLaS3 and MOLT-4 cell lines.

Its subcellular location is the cytoplasm. The protein resides in the cytoskeleton. The protein localises to the cell junction. It localises to the adherens junction. It is found in the myofibril. Its subcellular location is the sarcomere. The protein resides in the z line. In terms of biological role, involved in regulating cell migration through association with the actin cytoskeleton. Has an essential role in the maintenance of Z line and sarcomere integrity. The sequence is that of Nexilin from Homo sapiens (Human).